A 185-amino-acid chain; its full sequence is Ribosome-recycling factor (185 aa).

This sequence belongs to the RRF family.

Its subcellular location is the cytoplasm. Responsible for the release of ribosomes from messenger RNA at the termination of protein biosynthesis. May increase the efficiency of translation by recycling ribosomes from one round of translation to another. This chain is Ribosome-recycling factor, found in Shewanella baltica (strain OS185).